The sequence spans 506 residues: Trans-cinnamate 4-monooxygenase C4H1 (506 aa).

2 short sequence motifs (nuclear localization signal) span residues 161 to 168 (VKKMPESA) and 247 to 254 (QRRLQLFK). A heme-binding site is contributed by cysteine 448.

The protein belongs to the cytochrome P450 family. It depends on heme as a cofactor.

The protein resides in the nucleus. The catalysed reaction is (E)-cinnamate + reduced [NADPH--hemoprotein reductase] + O2 = (E)-4-coumarate + oxidized [NADPH--hemoprotein reductase] + H2O + H(+). It functions in the pathway phenylpropanoid metabolism; trans-4-coumarate biosynthesis; trans-4-coumarate from trans-cinnamate: step 1/1. Functionally, component of the floral volatile benzenoid/phenylpropanoid (FVBP) biosynthetic pathway that controls carbon flux to pigments essential for pollination or UV protection, to numerous pytoalexins synthesized by plants when challenged by pathogens, and to lignins. In Petunia hybrida (Petunia), this protein is Trans-cinnamate 4-monooxygenase C4H1.